Reading from the N-terminus, the 370-residue chain is tRNA-specific 2-thiouridylase MnmA 1 (370 aa).

ATP contacts are provided by residues Gly9–Ser16 and Met35. The tract at residues Asn95 to Asp97 is interaction with target base in tRNA. Catalysis depends on Cys100, which acts as the Nucleophile. A disulfide bridge connects residues Cys100 and Cys196. Gly124 contributes to the ATP binding site. Residues Lys146 to Gln148 are interaction with tRNA. Catalysis depends on Cys196, which acts as the Cysteine persulfide intermediate. Residues Arg306–Tyr307 are interaction with tRNA.

Belongs to the MnmA/TRMU family.

The protein localises to the cytoplasm. It carries out the reaction S-sulfanyl-L-cysteinyl-[protein] + uridine(34) in tRNA + AH2 + ATP = 2-thiouridine(34) in tRNA + L-cysteinyl-[protein] + A + AMP + diphosphate + H(+). Catalyzes the 2-thiolation of uridine at the wobble position (U34) of tRNA, leading to the formation of s(2)U34. This is tRNA-specific 2-thiouridylase MnmA 1 from Geobacillus kaustophilus (strain HTA426).